The primary structure comprises 535 residues: Atrial natriuretic peptide receptor 3 (535 aa).

A signal peptide spans 1–26 (MRSLLLFTFSACVLLARALLAGGASS). Residues 27-40 (GGGDTGPGNRRRER) constitute a propeptide that is removed on maturation. Residues 41-477 (EALAAQKIEV…CKSCGLEESA (437 aa)) lie on the Extracellular side of the membrane. The N-linked (GlcNAc...) asparagine glycan is linked to N81. Cystine bridges form between C103-C131 and C208-C256. N-linked (GlcNAc...) asparagine glycans are attached at residues N288 and N389. The chain crosses the membrane as a helical span at residues 478–498 (VTGIVVGALLGAGLLMAFYFF). Over 499–535 (RKKYRITIERRNHQEESNIGKHRELREDSIRSHFSVA) the chain is Cytoplasmic.

The protein belongs to the ANF receptor family. Homodimer; disulfide-linked. Interacts with OSTN.

Its subcellular location is the cell membrane. Functionally, receptor for the natriuretic peptide hormones, binding with similar affinities atrial natriuretic peptide NPPA/ANP, brain natriuretic peptide NPPB/BNP, and C-type natriuretic peptide NPPC/CNP. May function as a clearance receptor for NPPA, NPPB and NPPC, regulating their local concentrations and effects. Acts as a regulator of osteoblast differentiation and bone growth by binding to its ligand osteocrin, thereby preventing binding between NPR3/NPR-C and natriuretic peptides, leading to increase cGMP production. In Rattus norvegicus (Rat), this protein is Atrial natriuretic peptide receptor 3 (Npr3).